An 86-amino-acid chain; its full sequence is Small ribosomal subunit protein uS17 (86 aa).

This sequence belongs to the universal ribosomal protein uS17 family. As to quaternary structure, part of the 30S ribosomal subunit.

One of the primary rRNA binding proteins, it binds specifically to the 5'-end of 16S ribosomal RNA. The polypeptide is Small ribosomal subunit protein uS17 (Shouchella clausii (strain KSM-K16) (Alkalihalobacillus clausii)).